Consider the following 209-residue polypeptide: Probable glutathione peroxidase 8-B (209 aa).

The helical transmembrane segment at 18–40 (VFLVFFSMVLCTGILCVLQLKFL) threads the bilayer. Cysteine 79 is a catalytic residue.

This sequence belongs to the glutathione peroxidase family.

It localises to the membrane. It carries out the reaction 2 glutathione + H2O2 = glutathione disulfide + 2 H2O. The chain is Probable glutathione peroxidase 8-B (gpx8-b) from Xenopus laevis (African clawed frog).